We begin with the raw amino-acid sequence, 153 residues long: Pheromone-binding protein Gp-9 (153 aa).

Residues 1–19 (MKTFVLHIFIFALVAFASA) form the signal peptide. 3 cysteine pairs are disulfide-bonded: cysteine 37–cysteine 77, cysteine 73–cysteine 129, and cysteine 118–cysteine 138.

This sequence belongs to the PBP/GOBP family. In terms of assembly, homodimer.

The protein localises to the secreted. Its function is as follows. Colony queen number, a major feature of social organization, is associated with worker genotype for Gp-9. Colonies are headed by either a single reproductive queen (monogyne form) or multiple queens (polygyne form). Differences in worker Gp-9 genotypes between social forms may cause differences in workers' abilities to recognize queens and regulate their numbers. The polypeptide is Pheromone-binding protein Gp-9 (Solenopsis substituta (Fire ant)).